Consider the following 312-residue polypeptide: Large ribosomal subunit protein uL15m (312 aa).

Positions 63–89 are disordered; the sequence is RIRKGRGPSSGYGKTAGRGTKGQKAHG. Gly residues predominate over residues 70 to 82; that stretch reads PSSGYGKTAGRGT.

This sequence belongs to the universal ribosomal protein uL15 family. As to quaternary structure, component of the mitochondrial large ribosomal subunit (mt-LSU). Mature N.crassa 74S mitochondrial ribosomes consist of a small (37S) and a large (54S) subunit. The 37S small subunit contains a 16S ribosomal RNA (16S mt-rRNA) and 32 different proteins. The 54S large subunit contains a 23S rRNA (23S mt-rRNA) and 42 different proteins.

The protein localises to the mitochondrion. In terms of biological role, component of the mitochondrial ribosome (mitoribosome), a dedicated translation machinery responsible for the synthesis of mitochondrial genome-encoded proteins, including at least some of the essential transmembrane subunits of the mitochondrial respiratory chain. The mitoribosomes are attached to the mitochondrial inner membrane and translation products are cotranslationally integrated into the membrane. The chain is Large ribosomal subunit protein uL15m (mrpl10) from Neurospora crassa (strain ATCC 24698 / 74-OR23-1A / CBS 708.71 / DSM 1257 / FGSC 987).